The sequence spans 99 residues: Turripeptide OL71 (99 aa).

Post-translationally, contains 5 disulfide bonds. In terms of tissue distribution, expressed by the venom duct.

It is found in the secreted. Functionally, acts as a neurotoxin by inhibiting an ion channel. The sequence is that of Turripeptide OL71 from Iotyrris olangoensis (Sea snail).